The primary structure comprises 1273 residues: Homeobox protein cut-like ceh-44 (1273 aa).

2 coiled-coil regions span residues 101 to 407 and 440 to 468; these read LLKG…DGFK and RQKN…KFED. 3 consecutive DNA-binding regions (CUT) follow at residues 591–681, 832–919, and 978–1065; these read NVQA…LSPR, QAQY…KQPK, and IDES…KEES. The disordered stretch occupies residues 1069 to 1100; it reads VKAKIESVPAPREAPRPVKRKHSSDTDDYDLN. The segment at residues 1103–1162 is a DNA-binding region (homeobox); sequence KPIQRTVITDYQKDTLRFVFVNEQHPSNELCEQISLKLDMSLRTVQNWFHNHRTRSKARE.

The protein belongs to the CUT homeobox family.

Its subcellular location is the nucleus. In terms of biological role, probable DNA-binding regulatory protein involved in cell-fate specification. In Caenorhabditis elegans, this protein is Homeobox protein cut-like ceh-44.